Here is a 253-residue protein sequence, read N- to C-terminus: 5'-nucleotidase SurE (253 aa).

A divalent metal cation contacts are provided by Asp-8, Asp-9, Ser-39, and Asn-91.

Belongs to the SurE nucleotidase family. A divalent metal cation is required as a cofactor.

It localises to the cytoplasm. It catalyses the reaction a ribonucleoside 5'-phosphate + H2O = a ribonucleoside + phosphate. Its function is as follows. Nucleotidase that shows phosphatase activity on nucleoside 5'-monophosphates. This chain is 5'-nucleotidase SurE, found in Albidiferax ferrireducens (strain ATCC BAA-621 / DSM 15236 / T118) (Rhodoferax ferrireducens).